Consider the following 327-residue polypeptide: Expansin-B7 (327 aa).

An N-terminal signal peptide occupies residues 1-30; it reads MAGRSRRRSFWSVGVAAALLCLLAAHGCSA. The interval 30-88 is disordered; the sequence is AKHHKPKPTPGGISGNASSSSSNSSTPSIPPPVAPTPTAPTPPIPSPGTGSSNGSSGGG. Positions 44 to 56 are enriched in low complexity; it reads GNASSSSSNSSTP. Asn-45 and Asn-52 each carry an N-linked (GlcNAc...) asparagine glycan. Positions 57-75 are enriched in pro residues; it reads SIPPPVAPTPTAPTPPIPS. Residue Asn-82 is glycosylated (N-linked (GlcNAc...) asparagine). Residues 112–218 form the Expansin-like EG45 domain; that stretch reads GGACGFKNVN…RRVPCQYPGL (107 aa). 3 disulfide bridges follow: Cys-115–Cys-143, Cys-146–Cys-213, and Cys-151–Cys-157. An Expansin-like CBD domain is found at 231–322; sequence VYMAILVEYE…DWQPNTVYSS (92 aa). N-linked (GlcNAc...) asparagine glycosylation occurs at Asn-298.

It belongs to the expansin family. Expansin B subfamily.

The protein resides in the secreted. The protein localises to the cell wall. It localises to the membrane. May cause loosening and extension of plant cell walls by disrupting non-covalent bonding between cellulose microfibrils and matrix glucans. No enzymatic activity has been found. May be required for rapid internodal elongation in deepwater rice during submergence. This Oryza sativa subsp. japonica (Rice) protein is Expansin-B7 (EXPB7).